Consider the following 185-residue polypeptide: Casparian strip membrane protein 5 (185 aa).

Over 1–25 (MKAEAVESGEASTIIAAPKRGINRG) the chain is Cytoplasmic. The chain crosses the membrane as a helical span at residues 26–46 (ISIADLILRGVAAIGTFASAL). The Extracellular portion of the chain corresponds to 47–75 (TMGTTSETLTIFTQPIMIRAKYNDLPSLT). Residues 76-96 (FFVIANSIVCGYLVLSIPLSI) form a helical membrane-spanning segment. The Cytoplasmic portion of the chain corresponds to 97 to 108 (SHFIRREARITR). Residues 109-129 (IILVIFDTAMVELLTAGASAA) traverse the membrane as a helical segment. At 130–160 (TVVVYLAHKRNANWLAICQQFNNFCERISGS) the chain is on the extracellular side. A helical membrane pass occupies residues 161–181 (LIGSFASIIMIMLIIITSAVA). Residues 182-185 (LSRH) are Cytoplasmic-facing.

This sequence belongs to the Casparian strip membrane proteins (CASP) family. In terms of assembly, homodimer and heterodimers.

It is found in the cell membrane. In terms of biological role, regulates membrane-cell wall junctions and localized cell wall deposition. Required for establishment of the Casparian strip membrane domain (CSD) and the subsequent formation of Casparian strips, a cell wall modification of the root endodermis that determines an apoplastic barrier between the intraorganismal apoplasm and the extraorganismal apoplasm and prevents lateral diffusion. The sequence is that of Casparian strip membrane protein 5 from Populus trichocarpa (Western balsam poplar).